A 589-amino-acid polypeptide reads, in one-letter code: Oligo-1,6-glucosidase IMA3 (589 aa).

Aspartate 215 (nucleophile) is an active-site residue. The active-site Proton donor is the glutamate 277.

The protein belongs to the glycosyl hydrolase 13 family.

Its subcellular location is the cytoplasm. It carries out the reaction Hydrolysis of (1-&gt;6)-alpha-D-glucosidic linkages in some oligosaccharides produced from starch and glycogen by alpha-amylase, and in isomaltose.. Its function is as follows. Alpha-glucosidase with broad substrate specificity for alpha-1,4- and alpha-1,6-glucosides. Not required for isomaltose utilization, but overexpression allows the IMA1 null mutant to grow on isomaltose. This is Oligo-1,6-glucosidase IMA3 (IMA3) from Saccharomyces cerevisiae (strain ATCC 204508 / S288c) (Baker's yeast).